A 486-amino-acid polypeptide reads, in one-letter code: Glutamyl-tRNA(Gln) amidotransferase subunit A (486 aa).

The active-site Charge relay system is K77. Residues 130 to 158 are disordered; the sequence is SGENSSVKPTKNAWDQTKVPGGSSSGSAA. Over residues 132–144 the composition is skewed to polar residues; sequence ENSSVKPTKNAWD. The active-site Charge relay system is S152. Residue S176 is the Acyl-ester intermediate of the active site.

This sequence belongs to the amidase family. GatA subfamily. Heterotrimer of A, B and C subunits.

It catalyses the reaction L-glutamyl-tRNA(Gln) + L-glutamine + ATP + H2O = L-glutaminyl-tRNA(Gln) + L-glutamate + ADP + phosphate + H(+). In terms of biological role, allows the formation of correctly charged Gln-tRNA(Gln) through the transamidation of misacylated Glu-tRNA(Gln) in organisms which lack glutaminyl-tRNA synthetase. The reaction takes place in the presence of glutamine and ATP through an activated gamma-phospho-Glu-tRNA(Gln). The protein is Glutamyl-tRNA(Gln) amidotransferase subunit A (gatA) of Lactococcus lactis subsp. lactis (strain IL1403) (Streptococcus lactis).